Consider the following 354-residue polypeptide: Period circadian protein (354 aa).

PAS domains lie at Gly-1–Gln-55 and Phe-133–Glu-235. The segment at Ile-318–Ser-354 is disordered. Residues Ser-345–Ser-354 show a composition bias toward polar residues.

Forms a heterodimer with timeless (TIM); the complex then translocates into the nucleus. Post-translationally, phosphorylated with a circadian rhythmicity.

Its subcellular location is the nucleus. Functionally, involved in the generation of biological rhythms. The biological cycle depends on the rhythmic formation and nuclear localization of the tim-per complex. Light induces the degradation of tim, which promotes elimination of per. Nuclear activity of the heterodimer coordinatively regulates per and tim transcription negative feedback loop. Behaves as a negative element in circadian transcriptional loop. Does not appear to bind DNA, suggesting indirect transcriptional inhibition. The sequence is that of Period circadian protein (per) from Manduca sexta (Tobacco hawkmoth).